The following is a 452-amino-acid chain: Probable V-type proton ATPase subunit H (452 aa).

The protein belongs to the V-ATPase H subunit family. V-ATPase is a heteromultimeric enzyme composed of a peripheral catalytic V1 complex (components A to H) attached to an integral membrane V0 proton pore complex (components: a, c, c', c'' and d).

Functionally, subunit of the peripheral V1 complex of vacuolar ATPase. Subunit H activates the ATPase activity of the enzyme and couples ATPase activity to proton flow. Vacuolar ATPase is responsible for acidifying a variety of intracellular compartments in eukaryotic cells, thus providing most of the energy required for transport processes in the vacuolar system. This Oryza sativa subsp. japonica (Rice) protein is Probable V-type proton ATPase subunit H.